The chain runs to 86 residues: Small ribosomal subunit protein bS16 (86 aa).

It belongs to the bacterial ribosomal protein bS16 family.

The protein is Small ribosomal subunit protein bS16 of Borreliella burgdorferi (strain ATCC 35210 / DSM 4680 / CIP 102532 / B31) (Borrelia burgdorferi).